A 130-amino-acid chain; its full sequence is Cysteine methyltransferase (130 aa).

The catalysed reaction is [trehalose-6-phosphate synthase]-L-cysteine + S-adenosyl-L-methionine = [trehalose-6-phosphate synthase]-S-methyl-L-cysteine + S-adenosyl-L-homocysteine + H(+). In terms of biological role, S-adenosyl-L-methionine-dependent protein-cysteine S-methyltransferase with broad substrate specificity. Methylates trehalose-6-phosphate synthase (TPS), enhancing its enzymatic activity and promoting trehalose synthesis upon entry of cells into stationary phase. This chain is Cysteine methyltransferase, found in Saccharomyces cerevisiae (Baker's yeast).